The sequence spans 82 residues: Cytochrome c-551 (82 aa).

Residues cysteine 12, cysteine 15, histidine 16, and methionine 61 each coordinate heme c.

Post-translationally, binds 1 heme c group covalently per subunit.

In terms of biological role, this is a prokaryotic monoheme cytochrome, unreactive with mitochondrial cytochrome C oxidase or reductase. It functions in nitrite and nitrate respiration in Pseudomonas, but it is also found in other bacteria. In Pseudomonas denitrificans, this protein is Cytochrome c-551.